The sequence spans 460 residues: Transcriptional regulatory protein UME1 (460 aa).

An NEE-box motif is present at residues 14–22; that stretch reads NEEFKIWKK. WD repeat units lie at residues 233–271, 276–316, 339–379, and 411–451; these read PGIK…KPLW, SLDG…ALGD, FYSE…AIYN, and GENN…VLDG.

In terms of assembly, component of the RPD3C(L) complex composed of at least ASH1, CTI6, DEP1, PHO23, RPD3, RXT2, RXT3, SAP30, SDS3, SIN3, UME1 and UME6. Component of the RPD3C(S) complex composed of at least EAF3, RCO1, RPD3, SIN3, and UME1. Interacts with RPD3.

It localises to the cytoplasm. The protein resides in the nucleus. Functionally, catalytic component of the RPD3 histone deacetylase complexes RPD3C(L) and RPD3C(S) responsible for the deacetylation of lysine residues on the N-terminal part of the core histones (H2A, H2B, H3 and H4). Histone deacetylation gives a tag for epigenetic repression and plays an important role in transcriptional regulation, cell cycle progression and developmental events. The chain is Transcriptional regulatory protein UME1 (UME1) from Saccharomyces cerevisiae (strain ATCC 204508 / S288c) (Baker's yeast).